The following is a 358-amino-acid chain: Period circadian protein (358 aa).

PAS domains are found at residues 1 to 120 and 138 to 240; these read GVVM…QTVP and FIMR…YIIE.

Forms a heterodimer with timeless (TIM); the complex then translocates into the nucleus. Post-translationally, phosphorylated with a circadian rhythmicity.

It localises to the nucleus. Functionally, involved in the generation of biological rhythms. The biological cycle depends on the rhythmic formation and nuclear localization of the tim-per complex. Light induces the degradation of tim, which promotes elimination of per. Nuclear activity of the heterodimer coordinatively regulates per and tim transcription negative feedback loop. Behaves as a negative element in circadian transcriptional loop. Does not appear to bind DNA, suggesting indirect transcriptional inhibition. This is Period circadian protein (per) from Hyalophora cecropia (Cecropia moth).